The primary structure comprises 155 residues: DNA-directed RNA polymerase 1A (155 aa).

Asp88 is an active-site residue.

It belongs to the phage and mitochondrial RNA polymerase family.

The enzyme catalyses RNA(n) + a ribonucleoside 5'-triphosphate = RNA(n+1) + diphosphate. DNA-dependent RNA polymerase catalyzes the transcription of DNA into RNA using the four ribonucleoside triphosphates as substrates. This Nicotiana tabacum (Common tobacco) protein is DNA-directed RNA polymerase 1A (RPOT1-SYL).